The chain runs to 873 residues: MQTTDFNTKASSPKSTAEHTPLMKQFFAAKSDYPDLLLFFRMGDFYELFYDDARKAARLLDITLTQRGSSGGAPIPMAGVPVHAYEGYLARLVALGESVAICEQIGDPALAKGLVERKVVRIVTPGTVTDEALLDERRDTLLMAISRSKQGYGLAWADLAGGRFLVNEVDTVDALEAEIARLEPAELLVPDEDHWPEFLRGRIGVRRRPPWLFDADSGRRQLLAFFKLHDLSGFGIDDKPSATAAAGALLGYVEETQKQRLPHLTSIATEVASEAISMNAATRRHLELDTRVDGDTRNTLLGVLDSTVTPMGGRLLRRWLHRPLRLRDVLVQRHHAVGNLIDAGADADLREAFRALGDLERILTRVALRSARPRDFSTLRDGLALLPKVRTILAPLDSPRLQTLHAELGEHDATAHLLISAVAETPPLKLSDGGVIASGYDAELDELRRLSTNADQFLIDLEQRERASSGIATLKVGYNRVHGYYIEISKGQAEKAPLHYSRRQTLTNAERYITEELKTFEDKVLSARERSLSREKLLYEGLLDTLGTELEGLKRCAGALSELDVLAGFAERAQALDWSQPELDSAPCLRIERGRHPVVEAVRDHPFEPNDLDLHSDRRMLVITGPNMGGKSTYMRQNALIVLLAHIGSYVPASRAVIGPIDRILTRIGAGDDLARGQSTFMVEMAETSYILHHATPQSLVLMDEIGRGTSTYDGLALADAVARHLAHTNRCYTLFATHYFELTALADESHDGGASGIANVHLDAVEHGERLVFMHAVKDGPANRSFGLQVAALAGLPKAAVTQARRRLVELEQRGGESHSAQMAPTALDAPQQFGLFTAPSSAAQEALQALDPDELTPKQALEALYRLKALL.

625–632 (GPNMGGKS) serves as a coordination point for ATP.

It belongs to the DNA mismatch repair MutS family.

Functionally, this protein is involved in the repair of mismatches in DNA. It is possible that it carries out the mismatch recognition step. This protein has a weak ATPase activity. The chain is DNA mismatch repair protein MutS from Xanthomonas oryzae pv. oryzae (strain KACC10331 / KXO85).